A 275-amino-acid chain; its full sequence is uncharacterized protein (275 aa).

The protein belongs to the SMP-30/CGR1 family.

This is an uncharacterized protein from Sulfolobus acidocaldarius (strain ATCC 33909 / DSM 639 / JCM 8929 / NBRC 15157 / NCIMB 11770).